We begin with the raw amino-acid sequence, 677 residues long: UPF0313 protein RPA0679 (677 aa).

One can recognise a Radical SAM core domain in the interval 335-601 (AWDMIKTSVT…VEAIKGLRQR (267 aa)). [4Fe-4S] cluster-binding residues include cysteine 349, cysteine 353, and cysteine 356. A disordered region spans residues 635–677 (RPDQLVPAHQPPGTGKAAGTRRPVRGDGPKPQRFTTKGVRLVK).

It belongs to the UPF0313 family. [4Fe-4S] cluster serves as cofactor.

This chain is UPF0313 protein RPA0679, found in Rhodopseudomonas palustris (strain ATCC BAA-98 / CGA009).